Reading from the N-terminus, the 291-residue chain is N-acetylmannosamine kinase (291 aa).

Residues Ala-5–Lys-12 and Gly-132–Ser-139 contribute to the ATP site. Residues His-156, Cys-166, Cys-168, and Cys-173 each contribute to the Zn(2+) site.

Belongs to the ROK (NagC/XylR) family. NanK subfamily. Homodimer.

It carries out the reaction an N-acyl-D-mannosamine + ATP = an N-acyl-D-mannosamine 6-phosphate + ADP + H(+). It participates in amino-sugar metabolism; N-acetylneuraminate degradation; D-fructose 6-phosphate from N-acetylneuraminate: step 2/5. Catalyzes the phosphorylation of N-acetylmannosamine (ManNAc) to ManNAc-6-P. In Escherichia coli O127:H6 (strain E2348/69 / EPEC), this protein is N-acetylmannosamine kinase.